Reading from the N-terminus, the 99-residue chain is DNA/RNA-binding protein Alba 1 (99 aa).

Lysine 17 carries the post-translational modification N6-acetyllysine.

The protein belongs to the histone-like Alba family. Acetylated. Acetylation at Lys-17 decreases DNA-binding affinity.

It localises to the cytoplasm. The protein resides in the chromosome. In terms of biological role, binds double-stranded DNA tightly but without sequence specificity. Involved in DNA compaction. This is DNA/RNA-binding protein Alba 1 from Sulfurisphaera tokodaii (strain DSM 16993 / JCM 10545 / NBRC 100140 / 7) (Sulfolobus tokodaii).